Consider the following 186-residue polypeptide: Phosphopantetheine adenylyltransferase (186 aa).

Residue Thr14 participates in substrate binding. Residues 14–15 and His22 each bind ATP; that span reads TF. 3 residues coordinate substrate: Lys46, Leu78, and Arg92. Residues 93 to 95, Glu103, and 128 to 134 contribute to the ATP site; these read GLR and WLYISST.

It belongs to the bacterial CoaD family. In terms of assembly, homohexamer. Mg(2+) is required as a cofactor.

The protein localises to the cytoplasm. The catalysed reaction is (R)-4'-phosphopantetheine + ATP + H(+) = 3'-dephospho-CoA + diphosphate. Its pathway is cofactor biosynthesis; coenzyme A biosynthesis; CoA from (R)-pantothenate: step 4/5. Reversibly transfers an adenylyl group from ATP to 4'-phosphopantetheine, yielding dephospho-CoA (dPCoA) and pyrophosphate. The protein is Phosphopantetheine adenylyltransferase of Nitratidesulfovibrio vulgaris (strain ATCC 29579 / DSM 644 / CCUG 34227 / NCIMB 8303 / VKM B-1760 / Hildenborough) (Desulfovibrio vulgaris).